A 164-amino-acid chain; its full sequence is Lipoprotein signal peptidase (164 aa).

4 helical membrane-spanning segments follow: residues 12–32, 42–62, 70–90, and 102–122; these read WLWL…LILQ, LFPS…SFLA, WFFA…MYRS, and ALII…GFVV. Active-site residues include Asp123 and Asp141. Residues 137-157 form a helical membrane-spanning segment; sequence FNLADTAICVGAALIVLEGFL.

The protein belongs to the peptidase A8 family.

The protein localises to the cell inner membrane. It carries out the reaction Release of signal peptides from bacterial membrane prolipoproteins. Hydrolyzes -Xaa-Yaa-Zaa-|-(S,diacylglyceryl)Cys-, in which Xaa is hydrophobic (preferably Leu), and Yaa (Ala or Ser) and Zaa (Gly or Ala) have small, neutral side chains.. Its pathway is protein modification; lipoprotein biosynthesis (signal peptide cleavage). Functionally, this protein specifically catalyzes the removal of signal peptides from prolipoproteins. The protein is Lipoprotein signal peptidase of Shigella flexneri serotype 5b (strain 8401).